Here is a 386-residue protein sequence, read N- to C-terminus: TRIBOA-glucoside O-methyltransferase BX7 (386 aa).

S-adenosyl-L-methionine is bound by residues glycine 224, aspartate 248, methionine 270, and lysine 283. Histidine 287 acts as the Proton acceptor in catalysis.

It belongs to the class I-like SAM-binding methyltransferase superfamily. Cation-independent O-methyltransferase family. COMT subfamily. Expressed in seedlings and newly formed crown roots. Highest expression in the scutellar node. Low to non detectable levels in cob, tassel and mature organs like husk or leaves.

It catalyses the reaction TRIBOA beta-D-glucoside + S-adenosyl-L-methionine = DIMBOA beta-D-glucoside + S-adenosyl-L-homocysteine + H(+). Functionally, O-methyltransferase involved in the benzoxazinoid glucoside biosynthesis. Can use 2,4,7-trihydroxy-2H-1,4-benzoxazin-3(4H)-one 2-D-glucoside (TRIBOA-glucoside) as substrate, but not aglucone TRIBOA, caffeic acid, ferulic acid, apigenin or quercetin. In Zea mays (Maize), this protein is TRIBOA-glucoside O-methyltransferase BX7 (BX7).